Consider the following 140-residue polypeptide: Acyl-coenzyme A thioesterase 13 (140 aa).

M1 is modified (N-acetylmethionine). Residue T2 is modified to N-acetylthreonine; in Acyl-coenzyme A thioesterase 13, N-terminally processed. 3 positions are modified to N6-acetyllysine: K27, K37, and K43. Position 46 (E46) interacts with CoA. 2 residues coordinate substrate: N50 and G81. CoA contacts are provided by residues S83, 90–95, and 108–113; these read YMSPAK and KQGKTL. 2 positions are modified to N6-acetyllysine: K108 and K127. Position 137 (H137) interacts with CoA.

Belongs to the thioesterase PaaI family. Homotetramer. Interacts with PCTP.

It localises to the cytoplasm. The protein resides in the cytosol. Its subcellular location is the mitochondrion. It is found in the nucleus. The protein localises to the cytoskeleton. It localises to the spindle. It carries out the reaction a fatty acyl-CoA + H2O = a fatty acid + CoA + H(+). The catalysed reaction is decanoyl-CoA + H2O = decanoate + CoA + H(+). The enzyme catalyses octanoyl-CoA + H2O = octanoate + CoA + H(+). It catalyses the reaction butanoyl-CoA + H2O = butanoate + CoA + H(+). It carries out the reaction hexanoyl-CoA + H2O = hexanoate + CoA + H(+). The catalysed reaction is tetradecanoyl-CoA + H2O = tetradecanoate + CoA + H(+). The enzyme catalyses hexadecanoyl-CoA + H2O = hexadecanoate + CoA + H(+). It catalyses the reaction dodecanoyl-CoA + H2O = dodecanoate + CoA + H(+). It carries out the reaction (9Z)-octadecenoyl-CoA + H2O = (9Z)-octadecenoate + CoA + H(+). The catalysed reaction is (5Z,8Z,11Z,14Z)-eicosatetraenoyl-CoA + H2O = (5Z,8Z,11Z,14Z)-eicosatetraenoate + CoA + H(+). In terms of biological role, catalyzes the hydrolysis of acyl-CoAs into free fatty acids and coenzyme A (CoASH), regulating their respective intracellular levels. Has acyl-CoA thioesterase activity towards medium (C12) and long-chain (C18) fatty acyl-CoA substrates. Can also hydrolyze 3-hydroxyphenylacetyl-CoA and 3,4-dihydroxyphenylacetyl-CoA (in vitro). May play a role in controlling adaptive thermogenesis. The chain is Acyl-coenzyme A thioesterase 13 from Homo sapiens (Human).